Reading from the N-terminus, the 291-residue chain is Phosphate import ATP-binding protein PstB (291 aa).

The interval 1 to 21 is disordered; that stretch reads MANKQIIDKNDDLQAHTDRND. Positions 45–286 constitute an ABC transporter domain; the sequence is YSTKNLDLWY…PSDKQTEDYI (242 aa). Residue 77 to 84 coordinates ATP; the sequence is GPSGCGKS.

This sequence belongs to the ABC transporter superfamily. Phosphate importer (TC 3.A.1.7) family. In terms of assembly, the complex is composed of two ATP-binding proteins (PstB), two transmembrane proteins (PstC and PstA) and a solute-binding protein (PstS).

The protein localises to the cell membrane. The catalysed reaction is phosphate(out) + ATP + H2O = ADP + 2 phosphate(in) + H(+). Functionally, part of the ABC transporter complex PstSACB involved in phosphate import. Responsible for energy coupling to the transport system. The protein is Phosphate import ATP-binding protein PstB of Staphylococcus saprophyticus subsp. saprophyticus (strain ATCC 15305 / DSM 20229 / NCIMB 8711 / NCTC 7292 / S-41).